The sequence spans 73 residues: Small ribosomal subunit protein bS18 (73 aa).

Belongs to the bacterial ribosomal protein bS18 family. As to quaternary structure, part of the 30S ribosomal subunit. Forms a tight heterodimer with protein bS6.

Binds as a heterodimer with protein bS6 to the central domain of the 16S rRNA, where it helps stabilize the platform of the 30S subunit. The chain is Small ribosomal subunit protein bS18 from Prochlorococcus marinus (strain SARG / CCMP1375 / SS120).